A 373-amino-acid polypeptide reads, in one-letter code: NAD-dependent protein deacetylase SIR2rp1 (373 aa).

Positions 12–349 constitute a Deacetylase sirtuin-type domain; it reads HALGEPTVEG…LKLAECLGLR (338 aa). NAD(+) contacts are provided by residues 39-59 and 124-127; these read GAGA…TGIY and QNID. The active-site Proton acceptor is the histidine 144. Zn(2+) contacts are provided by cysteine 152, cysteine 155, cysteine 176, and cysteine 179. NAD(+) is bound by residues 216–218 and 241–243; these read GTS and NRE. Positions 263 to 313 are disordered; it reads DAVAKEGRSSSSQSRSPSASARREEGGTEDGSSSPNEEVEDASTSSSSDGY. Positions 271 to 282 are enriched in low complexity; the sequence is SSSSQSRSPSAS. Residue cysteine 335 coordinates NAD(+).

It belongs to the sirtuin family. Class I subfamily. Zn(2+) serves as cofactor.

Its subcellular location is the nucleus. The catalysed reaction is N(6)-acetyl-L-lysyl-[protein] + NAD(+) + H2O = 2''-O-acetyl-ADP-D-ribose + nicotinamide + L-lysyl-[protein]. In terms of biological role, NAD-dependent deacetylase, which probably acts as a regulator of gene expression believed to help form modified chromatin structures on the genes it regulates. The sequence is that of NAD-dependent protein deacetylase SIR2rp1 (SIR2rp1) from Leishmania major.